The primary structure comprises 62 residues: Cryptic Mu-phage protein com (62 aa).

Belongs to the com family.

This is Cryptic Mu-phage protein com from Shigella dysenteriae.